The primary structure comprises 31 residues: Cytochrome b6-f complex subunit 6 (31 aa).

The chain crosses the membrane as a helical span at residues 4-26 (ITSYFGFLLAALTVTSALFIGLS).

The protein belongs to the PetL family. As to quaternary structure, the 4 large subunits of the cytochrome b6-f complex are cytochrome b6, subunit IV (17 kDa polypeptide, PetD), cytochrome f and the Rieske protein, while the 4 small subunits are PetG, PetL, PetM and PetN. The complex functions as a dimer.

It localises to the plastid. The protein localises to the chloroplast thylakoid membrane. Component of the cytochrome b6-f complex, which mediates electron transfer between photosystem II (PSII) and photosystem I (PSI), cyclic electron flow around PSI, and state transitions. PetL is important for photoautotrophic growth as well as for electron transfer efficiency and stability of the cytochrome b6-f complex. The chain is Cytochrome b6-f complex subunit 6 from Daucus carota (Wild carrot).